The following is a 224-amino-acid chain: Acyl-protein thioesterase 1 (224 aa).

Catalysis depends on charge relay system residues serine 116, aspartate 170, and histidine 203.

It belongs to the AB hydrolase superfamily. AB hydrolase 2 family.

It localises to the cytoplasm. The protein resides in the nucleus. It catalyses the reaction S-hexadecanoyl-L-cysteinyl-[protein] + H2O = L-cysteinyl-[protein] + hexadecanoate + H(+). Its function is as follows. Hydrolyzes fatty acids from S-acylated cysteine residues in proteins with a strong preference for palmitoylated G-alpha proteins over other acyl substrates. Mediates the deacylation of G-alpha proteins such as GPA1 in vivo, but has weak or no activity toward palmitoylated Ras proteins. Has weak lysophospholipase activity in vitro; however such activity may not exist in vivo. In Schizosaccharomyces pombe (strain 972 / ATCC 24843) (Fission yeast), this protein is Acyl-protein thioesterase 1.